Consider the following 213-residue polypeptide: Pyridoxine/pyridoxamine 5'-phosphate oxidase (213 aa).

FMN-binding positions include 60–65 (RMVLMK), 75–76 (YS), Lys-82, and Gln-104. Residue Lys-65 participates in substrate binding. Positions 122 and 126 each coordinate substrate. FMN-binding positions include 139–140 (QS) and Trp-184. 190 to 192 (RLH) is a substrate binding site. Arg-194 is an FMN binding site.

Belongs to the pyridoxamine 5'-phosphate oxidase family. In terms of assembly, homodimer. Requires FMN as cofactor.

The enzyme catalyses pyridoxamine 5'-phosphate + O2 + H2O = pyridoxal 5'-phosphate + H2O2 + NH4(+). It carries out the reaction pyridoxine 5'-phosphate + O2 = pyridoxal 5'-phosphate + H2O2. The protein operates within cofactor metabolism; pyridoxal 5'-phosphate salvage; pyridoxal 5'-phosphate from pyridoxamine 5'-phosphate: step 1/1. It functions in the pathway cofactor metabolism; pyridoxal 5'-phosphate salvage; pyridoxal 5'-phosphate from pyridoxine 5'-phosphate: step 1/1. Functionally, catalyzes the oxidation of either pyridoxine 5'-phosphate (PNP) or pyridoxamine 5'-phosphate (PMP) into pyridoxal 5'-phosphate (PLP). This Rhodopseudomonas palustris (strain BisA53) protein is Pyridoxine/pyridoxamine 5'-phosphate oxidase.